The chain runs to 305 residues: Porphobilinogen deaminase (305 aa).

Cys-239 carries the S-(dipyrrolylmethanemethyl)cysteine modification.

It belongs to the HMBS family. As to quaternary structure, monomer. Dipyrromethane serves as cofactor.

It catalyses the reaction 4 porphobilinogen + H2O = hydroxymethylbilane + 4 NH4(+). It participates in porphyrin-containing compound metabolism; protoporphyrin-IX biosynthesis; coproporphyrinogen-III from 5-aminolevulinate: step 2/4. Tetrapolymerization of the monopyrrole PBG into the hydroxymethylbilane pre-uroporphyrinogen in several discrete steps. The protein is Porphobilinogen deaminase of Dichelobacter nodosus (strain VCS1703A).